Reading from the N-terminus, the 207-residue chain is dTTP/UTP pyrophosphatase (207 aa).

The Proton acceptor role is filled by aspartate 86.

This sequence belongs to the Maf family. YhdE subfamily. A divalent metal cation is required as a cofactor.

It localises to the cytoplasm. The enzyme catalyses dTTP + H2O = dTMP + diphosphate + H(+). It catalyses the reaction UTP + H2O = UMP + diphosphate + H(+). Its function is as follows. Nucleoside triphosphate pyrophosphatase that hydrolyzes dTTP and UTP. May have a dual role in cell division arrest and in preventing the incorporation of modified nucleotides into cellular nucleic acids. The polypeptide is dTTP/UTP pyrophosphatase (Nitrosospira multiformis (strain ATCC 25196 / NCIMB 11849 / C 71)).